Reading from the N-terminus, the 312-residue chain is 4-hydroxy-3-methylbut-2-enyl diphosphate reductase (312 aa).

Cys-14 contributes to the [4Fe-4S] cluster binding site. The (2E)-4-hydroxy-3-methylbut-2-enyl diphosphate site is built by His-43 and His-76. 2 residues coordinate dimethylallyl diphosphate: His-43 and His-76. Isopentenyl diphosphate contacts are provided by His-43 and His-76. Cys-98 provides a ligand contact to [4Fe-4S] cluster. His-125 is a (2E)-4-hydroxy-3-methylbut-2-enyl diphosphate binding site. His-125 contributes to the dimethylallyl diphosphate binding site. His-125 provides a ligand contact to isopentenyl diphosphate. Glu-127 serves as the catalytic Proton donor. Thr-165 contacts (2E)-4-hydroxy-3-methylbut-2-enyl diphosphate. A [4Fe-4S] cluster-binding site is contributed by Cys-195. Ser-223, Ser-224, Asn-225, and Ser-269 together coordinate (2E)-4-hydroxy-3-methylbut-2-enyl diphosphate. Positions 223, 224, 225, and 269 each coordinate dimethylallyl diphosphate. Isopentenyl diphosphate is bound by residues Ser-223, Ser-224, Asn-225, and Ser-269.

The protein belongs to the IspH family. It depends on [4Fe-4S] cluster as a cofactor.

It carries out the reaction isopentenyl diphosphate + 2 oxidized [2Fe-2S]-[ferredoxin] + H2O = (2E)-4-hydroxy-3-methylbut-2-enyl diphosphate + 2 reduced [2Fe-2S]-[ferredoxin] + 2 H(+). The catalysed reaction is dimethylallyl diphosphate + 2 oxidized [2Fe-2S]-[ferredoxin] + H2O = (2E)-4-hydroxy-3-methylbut-2-enyl diphosphate + 2 reduced [2Fe-2S]-[ferredoxin] + 2 H(+). Its pathway is isoprenoid biosynthesis; dimethylallyl diphosphate biosynthesis; dimethylallyl diphosphate from (2E)-4-hydroxy-3-methylbutenyl diphosphate: step 1/1. It participates in isoprenoid biosynthesis; isopentenyl diphosphate biosynthesis via DXP pathway; isopentenyl diphosphate from 1-deoxy-D-xylulose 5-phosphate: step 6/6. Catalyzes the conversion of 1-hydroxy-2-methyl-2-(E)-butenyl 4-diphosphate (HMBPP) into a mixture of isopentenyl diphosphate (IPP) and dimethylallyl diphosphate (DMAPP). Acts in the terminal step of the DOXP/MEP pathway for isoprenoid precursor biosynthesis. This is 4-hydroxy-3-methylbut-2-enyl diphosphate reductase from Leptospira interrogans serogroup Icterohaemorrhagiae serovar copenhageni (strain Fiocruz L1-130).